We begin with the raw amino-acid sequence, 553 residues long: Replication factor C large subunit (553 aa).

50–57 (GGPGVGKT) is a binding site for ATP. Residues 438–553 (GKRPGKPEAG…SKKQRTLFDF (116 aa)) are disordered. Basic and acidic residues predominate over residues 442–451 (GKPEAGEPRE). Residues 503–513 (EAPMAAAMPAA) show a composition bias toward low complexity. Over residues 532–553 (EPEKPPAAEDKCSKKQRTLFDF) the composition is skewed to basic and acidic residues.

Belongs to the activator 1 small subunits family. RfcL subfamily. As to quaternary structure, heteromultimer composed of small subunits (RfcS) and large subunits (RfcL).

Its function is as follows. Part of the RFC clamp loader complex which loads the PCNA sliding clamp onto DNA. The chain is Replication factor C large subunit from Methanocella arvoryzae (strain DSM 22066 / NBRC 105507 / MRE50).